A 247-amino-acid chain; its full sequence is NADH-ubiquinone oxidoreductase chain 6 (247 aa).

The next 5 helical transmembrane spans lie at 18 to 38 (TMILSVLSSPALVSGLMVVRA), 44 to 64 (SVLFPILVFCDTSGLLILLGL), 70 to 90 (ISPVVHIGAIAVSFLFVVMMF), 104 to 124 (YLPVSGIIGLIFWWEMFFILD), and 168 to 188 (VWFLVSSLILLVAMIGAIVLT).

The protein belongs to the complex I subunit 6 family.

It localises to the mitochondrion membrane. The catalysed reaction is a ubiquinone + NADH + 5 H(+)(in) = a ubiquinol + NAD(+) + 4 H(+)(out). Core subunit of the mitochondrial membrane respiratory chain NADH dehydrogenase (Complex I) that is believed to belong to the minimal assembly required for catalysis. Complex I functions in the transfer of electrons from NADH to the respiratory chain. The immediate electron acceptor for the enzyme is believed to be ubiquinone. This is NADH-ubiquinone oxidoreductase chain 6 (ND6) from Triticum aestivum (Wheat).